The following is a 333-amino-acid chain: Transcription initiation factor IIB (333 aa).

The TFIIB-type zinc-finger motif lies at 33 to 64 (EVYKCPICGNDKFVYNYERGEAVCIVCGAVVQ). Zn(2+) contacts are provided by C37, C40, C56, and C59. Repeat copies occupy residues 149-232 (QELE…LREL) and 243-324 (LYIS…ELAK).

Belongs to the TFIIB family.

Functionally, stabilizes TBP binding to an archaeal box-A promoter. Also responsible for recruiting RNA polymerase II to the pre-initiation complex (DNA-TBP-TFIIB). In Pyrobaculum aerophilum (strain ATCC 51768 / DSM 7523 / JCM 9630 / CIP 104966 / NBRC 100827 / IM2), this protein is Transcription initiation factor IIB.